The primary structure comprises 89 residues: Translation initiation factor IF-1 1 (89 aa).

The 73-residue stretch at 1–73 folds into the S1-like domain; sequence MSNKEQLIEM…TKGRITFRHL (73 aa).

This sequence belongs to the IF-1 family. Component of the 30S ribosomal translation pre-initiation complex which assembles on the 30S ribosome in the order IF-2 and IF-3, IF-1 and N-formylmethionyl-tRNA(fMet); mRNA recruitment can occur at any time during PIC assembly.

It localises to the cytoplasm. Functionally, one of the essential components for the initiation of protein synthesis. Stabilizes the binding of IF-2 and IF-3 on the 30S subunit to which N-formylmethionyl-tRNA(fMet) subsequently binds. Helps modulate mRNA selection, yielding the 30S pre-initiation complex (PIC). Upon addition of the 50S ribosomal subunit IF-1, IF-2 and IF-3 are released leaving the mature 70S translation initiation complex. The sequence is that of Translation initiation factor IF-1 1 from Acidovorax sp. (strain JS42).